The following is a 359-amino-acid chain: Peptide chain release factor 1 (359 aa).

Gln-236 carries the N5-methylglutamine modification.

Belongs to the prokaryotic/mitochondrial release factor family. Post-translationally, methylated by PrmC. Methylation increases the termination efficiency of RF1.

It is found in the cytoplasm. In terms of biological role, peptide chain release factor 1 directs the termination of translation in response to the peptide chain termination codons UAG and UAA. This Streptococcus pyogenes serotype M6 (strain ATCC BAA-946 / MGAS10394) protein is Peptide chain release factor 1.